The sequence spans 737 residues: Polyribonucleotide nucleotidyltransferase (737 aa).

The Mg(2+) site is built by Asp489 and Asp495. Positions 556-615 (PKIDTIKIDVDKIKIVIGKGGETIDKIIAETGVKIDIDEEGNVSIYSSDQDAINRAKEII) constitute a KH domain. Residues 625-693 (DEVYRAKVVR…EKGRIDASMK (69 aa)) enclose the S1 motif domain. The disordered stretch occupies residues 691–737 (SMKALLPRPPKPEHDEKGEKSERPHRPRHQKDYKPKKEFTETPKDSE). A compositionally biased stretch (basic and acidic residues) spans 700-737 (PKPEHDEKGEKSERPHRPRHQKDYKPKKEFTETPKDSE).

The protein belongs to the polyribonucleotide nucleotidyltransferase family. The cofactor is Mg(2+).

Its subcellular location is the cytoplasm. It catalyses the reaction RNA(n+1) + phosphate = RNA(n) + a ribonucleoside 5'-diphosphate. Functionally, involved in mRNA degradation. Catalyzes the phosphorolysis of single-stranded polyribonucleotides processively in the 3'- to 5'-direction. The protein is Polyribonucleotide nucleotidyltransferase of Streptococcus pneumoniae serotype 2 (strain D39 / NCTC 7466).